A 498-amino-acid chain; its full sequence is ATP synthase subunit beta, chloroplastic (498 aa).

Threonine 6 is modified (phosphothreonine). Serine 13 is subject to Phosphoserine. 172-179 is an ATP binding site; the sequence is GGAGVGKT.

This sequence belongs to the ATPase alpha/beta chains family. As to quaternary structure, F-type ATPases have 2 components, CF(1) - the catalytic core - and CF(0) - the membrane proton channel. CF(1) has five subunits: alpha(3), beta(3), gamma(1), delta(1), epsilon(1). CF(0) has four main subunits: a(1), b(1), b'(1) and c(9-12).

The protein resides in the plastid. The protein localises to the chloroplast thylakoid membrane. The enzyme catalyses ATP + H2O + 4 H(+)(in) = ADP + phosphate + 5 H(+)(out). Produces ATP from ADP in the presence of a proton gradient across the membrane. The catalytic sites are hosted primarily by the beta subunits. This is ATP synthase subunit beta, chloroplastic from Capsella bursa-pastoris (Shepherd's purse).